Consider the following 680-residue polypeptide: tRNA 5-methylaminomethyl-2-thiouridine biosynthesis bifunctional protein MnmC (680 aa).

The interval 1 to 267 (MTAEPNKPCQ…MAAILSSDAP (267 aa)) is tRNA (mnm(5)s(2)U34)-methyltransferase. The segment at 273 to 680 (IGGGLASAHL…LRKLLKGKAL (408 aa)) is FAD-dependent cmnm(5)s(2)U34 oxidoreductase.

The protein in the N-terminal section; belongs to the methyltransferase superfamily. tRNA (mnm(5)s(2)U34)-methyltransferase family. It in the C-terminal section; belongs to the DAO family. Requires FAD as cofactor.

The protein resides in the cytoplasm. It carries out the reaction 5-aminomethyl-2-thiouridine(34) in tRNA + S-adenosyl-L-methionine = 5-methylaminomethyl-2-thiouridine(34) in tRNA + S-adenosyl-L-homocysteine + H(+). Functionally, catalyzes the last two steps in the biosynthesis of 5-methylaminomethyl-2-thiouridine (mnm(5)s(2)U) at the wobble position (U34) in tRNA. Catalyzes the FAD-dependent demodification of cmnm(5)s(2)U34 to nm(5)s(2)U34, followed by the transfer of a methyl group from S-adenosyl-L-methionine to nm(5)s(2)U34, to form mnm(5)s(2)U34. The protein is tRNA 5-methylaminomethyl-2-thiouridine biosynthesis bifunctional protein MnmC of Shewanella putrefaciens (strain CN-32 / ATCC BAA-453).